The following is a 763-amino-acid chain: Phosphoglycerol transferase I (763 aa).

Helical transmembrane passes span M1–A21, W26–Y46, I77–V97, and V108–F128.

Belongs to the OpgB family.

It localises to the cell inner membrane. The enzyme catalyses a phosphatidylglycerol + a membrane-derived-oligosaccharide D-glucose = a 1,2-diacyl-sn-glycerol + a membrane-derived-oligosaccharide 6-(glycerophospho)-D-glucose.. It functions in the pathway glycan metabolism; osmoregulated periplasmic glucan (OPG) biosynthesis. In terms of biological role, transfers a phosphoglycerol residue from phosphatidylglycerol to the membrane-bound nascent glucan backbones. In Salmonella choleraesuis (strain SC-B67), this protein is Phosphoglycerol transferase I.